We begin with the raw amino-acid sequence, 251 residues long: Adenosine 5'-phosphosulfate reductase (251 aa).

[4Fe-4S] cluster is bound by residues Cys-121, Cys-122, Cys-204, and Cys-207. Residue Cys-232 is the Nucleophile; cysteine thiosulfonate intermediate of the active site.

The protein belongs to the PAPS reductase family. CysH subfamily. The cofactor is [4Fe-4S] cluster.

Its subcellular location is the cytoplasm. The catalysed reaction is [thioredoxin]-disulfide + sulfite + AMP + 2 H(+) = adenosine 5'-phosphosulfate + [thioredoxin]-dithiol. Its pathway is sulfur metabolism; hydrogen sulfide biosynthesis; sulfite from sulfate. Its function is as follows. Catalyzes the formation of sulfite from adenosine 5'-phosphosulfate (APS) using thioredoxin as an electron donor. This is Adenosine 5'-phosphosulfate reductase from Sinorhizobium fredii (strain USDA 257).